We begin with the raw amino-acid sequence, 371 residues long: Cytochrome b (371 aa).

4 helical membrane-spanning segments follow: residues 25 to 45 (FGSMLLTCLALQVLTGFFLAI), 69 to 90 (WMMQNLHAIGASMFFICIYIHI), 105 to 125 (WMSGITLLITLMATAFFGYVL), and 170 to 190 (FFALHFILPFAIISLSSLHII). Heme b is bound by residues His75 and His89. The heme b site is built by His174 and His188. Residue His193 participates in a ubiquinone binding. The next 4 membrane-spanning stretches (helical) occupy residues 218 to 238 (HKDLLLLTFMILLLFTIVSFL), 280 to 300 (LGGALALVMSIMILFIIPFTH), 312 to 332 (LSQLMFWTLVSTFATITWAAT), and 339 to 358 (FIIISQTTSMLYFTFFLSTP).

Belongs to the cytochrome b family. In terms of assembly, the cytochrome bc1 complex contains 3 respiratory subunits (MT-CYB, CYC1 and UQCRFS1), 2 core proteins (UQCRC1 and UQCRC2) and probably 6 low-molecular weight proteins. The cofactor is heme b.

The protein localises to the mitochondrion inner membrane. In terms of biological role, component of the ubiquinol-cytochrome c reductase complex (complex III or cytochrome b-c1 complex) that is part of the mitochondrial respiratory chain. The b-c1 complex mediates electron transfer from ubiquinol to cytochrome c. Contributes to the generation of a proton gradient across the mitochondrial membrane that is then used for ATP synthesis. This is Cytochrome b (MT-CYB) from Antaresia maculosa (Eastern small blotched python).